We begin with the raw amino-acid sequence, 106 residues long: Large ribosomal subunit protein P1 (106 aa).

Residues 66 to 76 (AQPQATQAQPA) show a composition bias toward low complexity. Residues 66–106 (AQPQATQAQPAAEEKKEEKKEEEKKGPSEEEIASGLASLFG) form a disordered region. A compositionally biased stretch (basic and acidic residues) spans 77 to 93 (AEEKKEEKKEEEKKGPS).

Belongs to the eukaryotic ribosomal protein P1/P2 family. As to quaternary structure, part of the 50S ribosomal subunit. Homodimer, it forms part of the ribosomal stalk which helps the ribosome interact with GTP-bound translation factors. Forms a heptameric uL10/P0(P1)2(P1)2(P1)2 complex, where uL10/P0 forms an elongated spine to which the P1 dimers bind in a sequential fashion.

Forms part of the ribosomal stalk, playing a central role in the interaction of the ribosome with GTP-bound translation factors. The chain is Large ribosomal subunit protein P1 from Saccharolobus solfataricus (strain ATCC 35092 / DSM 1617 / JCM 11322 / P2) (Sulfolobus solfataricus).